The sequence spans 346 residues: Putative agmatine deiminase (346 aa).

Cys338 (amidino-cysteine intermediate) is an active-site residue.

This sequence belongs to the agmatine deiminase family.

The enzyme catalyses agmatine + H2O = N-carbamoylputrescine + NH4(+). In Streptomyces avermitilis (strain ATCC 31267 / DSM 46492 / JCM 5070 / NBRC 14893 / NCIMB 12804 / NRRL 8165 / MA-4680), this protein is Putative agmatine deiminase.